A 397-amino-acid polypeptide reads, in one-letter code: Probable sugar efflux transporter (397 aa).

Helical transmembrane passes span 15–35 (VIVM…PVAL), 51–71 (GLMI…CMLM), 80–100 (LLIS…FAWN), 103–123 (VLLI…SITA), 137–157 (QALG…LPLG), 169–189 (TFTL…RLLP), 209–229 (PMLI…FTAY), 246–266 (KATA…VLFS), 277–297 (LLSS…VSGI), 299–319 (GAIF…SLAM), 333–353 (VATA…ALIG), and 365–385 (IGYV…LMFL).

Belongs to the major facilitator superfamily. SotB (TC 2.A.1.2) family.

The protein resides in the cell inner membrane. Its function is as follows. Involved in the efflux of sugars. The physiological role may be the reduction of the intracellular concentration of toxic sugars or sugar metabolites. This Mannheimia succiniciproducens (strain KCTC 0769BP / MBEL55E) protein is Probable sugar efflux transporter.